Here is a 215-residue protein sequence, read N- to C-terminus: Cytidylate kinase (215 aa).

10-18 (GPAASGKGT) serves as a coordination point for ATP.

It belongs to the cytidylate kinase family. Type 1 subfamily.

It is found in the cytoplasm. The enzyme catalyses CMP + ATP = CDP + ADP. It catalyses the reaction dCMP + ATP = dCDP + ADP. This chain is Cytidylate kinase, found in Bartonella quintana (strain Toulouse) (Rochalimaea quintana).